The chain runs to 531 residues: Cytochrome P450 monooxygenase acuC (531 aa).

A helical membrane pass occupies residues 3–23 (PIVWLLGGAIALLVVVIRAAW). Cys447 contributes to the heme binding site.

Belongs to the cytochrome P450 family. Heme serves as cofactor.

It localises to the endoplasmic reticulum membrane. The enzyme catalyses 3-methylphenol + reduced [NADPH--hemoprotein reductase] + O2 = 3-hydroxybenzyl alcohol + oxidized [NADPH--hemoprotein reductase] + H2O + H(+). Its pathway is secondary metabolite biosynthesis. In terms of biological role, cytochrome P450 monooxygenase; part of the gene cluster that mediates the biosynthesis of aculins. The pathway begins with the synthesis of 6-methylsalicylic acid by the polyketide synthase (PKS) acuA via condensation of acetate and malonate units. The 6-methylsalicylic acid decarboxylase acuB then catalyzes the decarboxylation of 6-methylsalicylic acid to yield m-cresol (also known as 3-methylphenol). These first reactions occur in the cytosol. The intermediate m-cresol is then transported into the endoplasmic reticulum where the cytochrome P450 monooxygenase acuC converts it to m-hydroxybenzyl alcohol, which is further converted to gentisyl alcohol by the cytochrome P450 monooxygenase acuD. Gentisyl alcohol is further oxidized by the oxidoreductase acuE that probably catalyzes hydroxylation of the aromatic ring. The aromatic system might then be opened by oxidation through a Baeyer-Villiger type of oxidation, which could be catalyzed by acuF, with the carboxylic acid at C-1 subsequently reduced to an aldehyde by acuG. Subsequently, a hemiacetal is formed, before the dehydrogenase acuH would reduce the double bond between C-4 and C-6. Finally, keto-enol tautomerism results in formation of aculinic acid, which exists as two diastereomers (both R/S configurations at C-1) by non-enzymatic hemiacetal formation. The carboxypeptidase acuI could be involved in the linking of aculinic acid to an aculene A moiety produced by the aculene biosynthesis cluster and which leads to the production of aculin A. AcuI may also be involved in the attachment of proline to aculinic acid to form epi-aculins A and B. The sequence is that of Cytochrome P450 monooxygenase acuC from Aspergillus aculeatus (strain ATCC 16872 / CBS 172.66 / WB 5094).